The following is a 1161-amino-acid chain: Lateral signaling target protein 2 homolog (1161 aa).

6 disordered regions span residues A417–D510, A583–S831, M890–P918, D935–S978, S992–E1014, and G1029–R1095. Over residues G419–G429 the composition is skewed to gly residues. Positions P438–P453 are enriched in basic residues. A compositionally biased stretch (basic and acidic residues) spans G468–I487. Over residues E488–D510 the composition is skewed to acidic residues. The segment covering A583–S601 has biased composition (low complexity). Positions S669–D704 are enriched in acidic residues. The span at K728–R742 shows a compositional bias: basic residues. Over residues P743–K757 the composition is skewed to low complexity. The segment covering S758–H773 has biased composition (basic residues). 2 stretches are compositionally biased toward low complexity: residues G781–S800 and M807–S831. A compositionally biased stretch (acidic residues) spans E896–S910. Polar residues-rich tracts occupy residues D935–Y948 and E956–S967. Residues G996–R1010 are compositionally biased toward gly residues. Residues S1054–N1065 show a composition bias toward low complexity. Positions T1081 to P1094 are enriched in basic and acidic residues. Residues D1099 to V1159 form an FYVE-type zinc finger. C1105, C1108, C1121, C1124, C1129, C1132, C1151, and C1154 together coordinate Zn(2+).

Belongs to the lst-2 family.

In terms of biological role, negative regulator of epidermal growth factor receptor (EGFR) signaling. The polypeptide is Lateral signaling target protein 2 homolog (Anopheles gambiae (African malaria mosquito)).